A 641-amino-acid chain; its full sequence is Serine/threonine-protein kinase pink-1, mitochondrial (641 aa).

Residues M1–F74 constitute a mitochondrion transit peptide. One can recognise a Protein kinase domain in the interval Y137–F483. ATP is bound by residues L143–V151 and K199. D338 (proton acceptor) is an active-site residue.

It belongs to the protein kinase superfamily. Ser/Thr protein kinase family. Requires Mg(2+) as cofactor. Autophosphorylated.

It is found in the mitochondrion. The catalysed reaction is L-seryl-[protein] + ATP = O-phospho-L-seryl-[protein] + ADP + H(+). It catalyses the reaction L-threonyl-[protein] + ATP = O-phospho-L-threonyl-[protein] + ADP + H(+). Its function is as follows. Protects against mitochondrial dysfunction during cellular stress, potentially by phosphorylating mitochondrial proteins. Plays a role in mitophagy. The chain is Serine/threonine-protein kinase pink-1, mitochondrial (pink-1) from Caenorhabditis elegans.